Reading from the N-terminus, the 304-residue chain is Oxygen-dependent coproporphyrinogen-III oxidase (304 aa).

Ser-94 is a binding site for substrate. Residues His-98 and His-108 each contribute to the a divalent metal cation site. His-108 acts as the Proton donor in catalysis. Position 110 to 112 (110 to 112 (NVR)) interacts with substrate. Positions 147 and 177 each coordinate a divalent metal cation. An important for dimerization region spans residues 242–277 (YVEFNLVYDRGTLFGLQTGGRTESILMSMPPLVRWE). 260–262 (GGR) serves as a coordination point for substrate.

This sequence belongs to the aerobic coproporphyrinogen-III oxidase family. Homodimer. A divalent metal cation serves as cofactor.

It is found in the cytoplasm. It carries out the reaction coproporphyrinogen III + O2 + 2 H(+) = protoporphyrinogen IX + 2 CO2 + 2 H2O. Its pathway is porphyrin-containing compound metabolism; protoporphyrin-IX biosynthesis; protoporphyrinogen-IX from coproporphyrinogen-III (O2 route): step 1/1. Functionally, involved in the heme biosynthesis. Catalyzes the aerobic oxidative decarboxylation of propionate groups of rings A and B of coproporphyrinogen-III to yield the vinyl groups in protoporphyrinogen-IX. This is Oxygen-dependent coproporphyrinogen-III oxidase from Shewanella pealeana (strain ATCC 700345 / ANG-SQ1).